The primary structure comprises 192 residues: Phosphoheptose isomerase (192 aa).

In terms of domain architecture, SIS spans 37–192; the sequence is LADSFKAGGK…IQLIEKEMVK (156 aa). A substrate-binding site is contributed by 52 to 54; sequence NGG. Zn(2+) contacts are provided by histidine 61 and glutamate 65. Substrate is bound by residues glutamate 65, 93-94, 119-121, serine 124, and glutamine 172; these read ND and STS. Glutamine 172 and histidine 180 together coordinate Zn(2+).

The protein belongs to the SIS family. GmhA subfamily. In terms of assembly, homotetramer. The cofactor is Zn(2+).

The protein localises to the cytoplasm. The enzyme catalyses 2 D-sedoheptulose 7-phosphate = D-glycero-alpha-D-manno-heptose 7-phosphate + D-glycero-beta-D-manno-heptose 7-phosphate. It participates in carbohydrate biosynthesis; D-glycero-D-manno-heptose 7-phosphate biosynthesis; D-glycero-alpha-D-manno-heptose 7-phosphate and D-glycero-beta-D-manno-heptose 7-phosphate from sedoheptulose 7-phosphate: step 1/1. In terms of biological role, catalyzes the isomerization of sedoheptulose 7-phosphate in D-glycero-D-manno-heptose 7-phosphate. The protein is Phosphoheptose isomerase of Salmonella agona (strain SL483).